A 388-amino-acid polypeptide reads, in one-letter code: Alpha-2B adrenergic receptor (388 aa).

Residues 1 to 25 (AIAAVITFLILFTIFGNALVILAVL) traverse the membrane as a helical segment. Residues 26–36 (TSRSLRAPQNL) are Cytoplasmic-facing. Residues 37–62 (FLVSLAAADILVATLIIPFSLANELL) traverse the membrane as a helical segment. The Extracellular segment spans residues 63–72 (GYWYFRRTWC). Residues C72 and C151 are joined by a disulfide bond. A helical membrane pass occupies residues 73-95 (EVYLALDVLFCTSSIVHLCAISL). At 96-117 (DRYWAVSRALEYNSKRTPRXIK) the chain is on the cytoplasmic side. The chain crosses the membrane as a helical span at residues 118-140 (CIILTVWLIAAAISLPPLIYKGD). At 141-156 (QGPQPRGRPQCKLNQE) the chain is on the extracellular side. Residues 157-180 (AWYILSSSIGSFFAPCLIMILVYL) traverse the membrane as a helical segment. Residues 181–352 (RIYVIAKRSN…LTREKRFTFV (172 aa)) are Cytoplasmic-facing. Residues 193–309 (GPRAKGASRE…ASACNPPLQQ (117 aa)) form a disordered region. A compositionally biased stretch (basic and acidic residues) spans 239–249 (PTGEKEGKTPE). A compositionally biased stretch (acidic residues) spans 279–291 (PEEEAEEEEEECE). The segment covering 292–302 (PQAAPASSASA) has biased composition (low complexity). Residues 353–376 (LAVVIGVFVLCWFPFFFSYSLGAI) form a helical membrane-spanning segment. The Extracellular segment spans residues 377-385 (CPQRCKVPH). The chain crosses the membrane as a helical span at residues 386–388 (GLF).

This sequence belongs to the G-protein coupled receptor 1 family. Adrenergic receptor subfamily. ADRA2B sub-subfamily. As to quaternary structure, interacts with RAB26. Interacts with PPP1R9B.

Its subcellular location is the cell membrane. Alpha-2 adrenergic receptors mediate the catecholamine-induced inhibition of adenylate cyclase through the action of G proteins. The protein is Alpha-2B adrenergic receptor (ADRA2B) of Orycteropus afer (Aardvark).